Consider the following 1031-residue polypeptide: Telomerase reverse transcriptase (1031 aa).

The region spanning 498–852 (KEVEEWKKSL…DYCDWIGISI (355 aa)) is the Reverse transcriptase domain. Residues Asp-603, Asp-781, and Asp-782 each coordinate Mg(2+).

It belongs to the reverse transcriptase family. Telomerase subfamily. Component of the telomerase holoenzyme complex composed minimally of the catalytic subunit p123 and the telomerase RNA template component.

It localises to the nucleus. It is found in the chromosome. The protein localises to the telomere. It catalyses the reaction DNA(n) + a 2'-deoxyribonucleoside 5'-triphosphate = DNA(n+1) + diphosphate. Functionally, telomerase is a ribonucleoprotein enzyme essential for the replication of chromosome termini in most eukaryotes. It elongates telomeres. It is a reverse transcriptase that adds simple sequence repeats to chromosome ends by copying a template sequence within the RNA component of the enzyme. This is Telomerase reverse transcriptase from Euplotes aediculatus (Ciliate).